Reading from the N-terminus, the 294-residue chain is 4-hydroxy-tetrahydrodipicolinate synthase (294 aa).

Thr45 provides a ligand contact to pyruvate. Catalysis depends on Tyr133, which acts as the Proton donor/acceptor. Lys161 serves as the catalytic Schiff-base intermediate with substrate. Ile203 contributes to the pyruvate binding site.

It belongs to the DapA family. In terms of assembly, homotetramer; dimer of dimers.

The protein resides in the cytoplasm. It catalyses the reaction L-aspartate 4-semialdehyde + pyruvate = (2S,4S)-4-hydroxy-2,3,4,5-tetrahydrodipicolinate + H2O + H(+). Its pathway is amino-acid biosynthesis; L-lysine biosynthesis via DAP pathway; (S)-tetrahydrodipicolinate from L-aspartate: step 3/4. Catalyzes the condensation of (S)-aspartate-beta-semialdehyde [(S)-ASA] and pyruvate to 4-hydroxy-tetrahydrodipicolinate (HTPA). The sequence is that of 4-hydroxy-tetrahydrodipicolinate synthase from Shewanella pealeana (strain ATCC 700345 / ANG-SQ1).